The chain runs to 233 residues: Ribosome maturation protein SDO1 homolog (233 aa).

It belongs to the SDO1/SBDS family.

The protein is Ribosome maturation protein SDO1 homolog of Aeropyrum pernix (strain ATCC 700893 / DSM 11879 / JCM 9820 / NBRC 100138 / K1).